Here is a 707-residue protein sequence, read N- to C-terminus: Nucleolin 2 (707 aa).

The disordered stretch occupies residues 1-446 (MGKSSKKSAV…TPASNQNQAT (446 aa)). Composition is skewed to basic and acidic residues over residues 30–40 (RNAEDEIEKAV) and 47–60 (TVRE…EEAK). 3 stretches are compositionally biased toward acidic residues: residues 75 to 85 (SSEEDSSESEE), 108 to 120 (SSDD…SSDD), and 144 to 153 (DSSDESLSDD). The span at 158-170 (KPAAPLKKPVALA) shows a compositional bias: low complexity. Composition is skewed to acidic residues over residues 219 to 232 (DSSD…SDED), 248 to 263 (SESS…DDEA), and 271 to 287 (ESSD…SDSD). A compositionally biased stretch (basic and acidic residues) spans 300-311 (LTKDTKKGQSKD). Residues 312–326 (ESEDSSDESSEESGD) show a composition bias toward acidic residues. The span at 336–347 (STTSGTTKPSPK) shows a compositional bias: low complexity. The span at 355-370 (SDDESDEDDSSDESSD) shows a compositional bias: acidic residues. Low complexity predominate over residues 376–394 (KQTQAKKQAPVAQESSSSD). Residues 395-406 (ESSEEDSDMESD) show a composition bias toward acidic residues. Over residues 407–417 (EPAKTPQKKET) the composition is skewed to basic and acidic residues. A compositionally biased stretch (polar residues) spans 420–429 (SVGSNKSATK). In terms of domain architecture, RRM 1 spans 449-525 (KTLFVGNLPY…RPVRLDLARE (77 aa)). 2 disordered regions span residues 527 to 546 (GAYT…PAQS) and 629 to 707 (RPRP…GDDD). The RRM 2 domain occupies 549–630 (NTIFIKGFDT…YSLYVDEARP (82 aa)). Over residues 657-681 (GRGDGSRGRGDRGRGRGFGRGDRGH) the composition is skewed to basic and acidic residues.

It is found in the nucleus. The protein localises to the nucleolus. Involved in pre-rRNA processing and ribosome assembly. The chain is Nucleolin 2 from Oryza sativa subsp. japonica (Rice).